We begin with the raw amino-acid sequence, 160 residues long: Ribosomal RNA large subunit methyltransferase H (160 aa).

Positions 76 and 108 each coordinate S-adenosyl-L-methionine.

Belongs to the RNA methyltransferase RlmH family. In terms of assembly, homodimer.

Its subcellular location is the cytoplasm. The enzyme catalyses pseudouridine(1915) in 23S rRNA + S-adenosyl-L-methionine = N(3)-methylpseudouridine(1915) in 23S rRNA + S-adenosyl-L-homocysteine + H(+). Specifically methylates the pseudouridine at position 1915 (m3Psi1915) in 23S rRNA. The sequence is that of Ribosomal RNA large subunit methyltransferase H from Nitrobacter hamburgensis (strain DSM 10229 / NCIMB 13809 / X14).